An 838-amino-acid polypeptide reads, in one-letter code: Rab effector MyRIP (838 aa).

The RabBD domain maps to 4–124; the sequence is KLDLSGLSNN…TQSLEWFYNN (121 aa). The FYVE-type zinc-finger motif lies at 58–112; the sequence is KFNEHCCIRCCSPFTFLLNPKRQCLDCHYNICKSCCSYSQSERGYICAACQKSRH. A coiled-coil region spans residues 188–237; it reads ADTLTVALRVAEEAIEEAIAKAENYKDSLEKQNEARYLHEHKEELIEELA. Polar residues-rich tracts occupy residues 263-290 and 451-484; these read QNQK…TSQP and TFTQ…SPST. Disordered stretches follow at residues 263–331, 444–501, 525–570, and 681–838; these read QNQK…TEVE, SQHD…ETHL, NFNP…LYSA, and ERDV…EKRN. Basic and acidic residues-rich tracts occupy residues 697 to 736 and 753 to 838; these read NKQE…ERQT and RQMK…EKRN. The stretch at 714-833 forms a coiled coil; that stretch reads KERRESKRES…DLEKKRKSIR (120 aa).

In terms of assembly, interacts with prkar2aa.

The protein localises to the cytoplasm. Its subcellular location is the perinuclear region. The protein resides in the cytoplasmic vesicle. It is found in the secretory vesicle. May link secretory vesicles to actin filaments. May function as a protein kinase A-anchoring protein (AKAP). May act as a scaffolding protein that links PKA to components of the exocytosis machinery, thus facilitating exocytosis. This Danio rerio (Zebrafish) protein is Rab effector MyRIP (myrip).